Consider the following 69-residue polypeptide: Purkinje cell protein 4-like protein 1 (69 aa).

Residues 1-15 (MSELNTKTSPATNQA) show a composition bias toward polar residues. Positions 1–47 (MSELNTKTSPATNQAPGPEEKGKAGSAKKTEDEEEEIDIDLTAPETE) are disordered. A Phosphothreonine modification is found at Thr-8. Residues 18 to 31 (PEEKGKAGSAKKTE) show a composition bias toward basic and acidic residues. Residues 46 to 69 (TEKAALAIQGKFRRFQKRKKDPSS) enclose the IQ domain.

The protein belongs to the PCP4 family.

The protein is Purkinje cell protein 4-like protein 1 (PCP4L1) of Bos taurus (Bovine).